The chain runs to 292 residues: 4-hydroxy-tetrahydrodipicolinate synthase (292 aa).

T45 lines the pyruvate pocket. The Proton donor/acceptor role is filled by Y133. Residue K161 is the Schiff-base intermediate with substrate of the active site. Residue I203 coordinates pyruvate.

This sequence belongs to the DapA family. As to quaternary structure, homotetramer; dimer of dimers.

It is found in the cytoplasm. The enzyme catalyses L-aspartate 4-semialdehyde + pyruvate = (2S,4S)-4-hydroxy-2,3,4,5-tetrahydrodipicolinate + H2O + H(+). It participates in amino-acid biosynthesis; L-lysine biosynthesis via DAP pathway; (S)-tetrahydrodipicolinate from L-aspartate: step 3/4. In terms of biological role, catalyzes the condensation of (S)-aspartate-beta-semialdehyde [(S)-ASA] and pyruvate to 4-hydroxy-tetrahydrodipicolinate (HTPA). This is 4-hydroxy-tetrahydrodipicolinate synthase from Vibrio cholerae serotype O1 (strain ATCC 39541 / Classical Ogawa 395 / O395).